Here is a 67-residue protein sequence, read N- to C-terminus: Beta-defensin 103A (67 aa).

The first 22 residues, 1–22, serve as a signal peptide directing secretion; sequence MRIHYLLFTLLFLFLVPVPGHG. 3 cysteine pairs are disulfide-bonded: Cys-33-Cys-62, Cys-40-Cys-55, and Cys-45-Cys-63.

Belongs to the beta-defensin family.

It localises to the secreted. In terms of biological role, exhibits antimicrobial activity against Gram-positive and Gram-negative bacteria. This is Beta-defensin 103A (DEFB103A) from Gorilla gorilla gorilla (Western lowland gorilla).